The following is a 293-amino-acid chain: 1D-myo-inositol 2-acetamido-2-deoxy-alpha-D-glucopyranoside deacetylase 2 (293 aa).

Zn(2+)-binding residues include His6, Asp9, and His142.

It belongs to the MshB deacetylase family. It depends on Zn(2+) as a cofactor.

It carries out the reaction 1D-myo-inositol 2-acetamido-2-deoxy-alpha-D-glucopyranoside + H2O = 1D-myo-inositol 2-amino-2-deoxy-alpha-D-glucopyranoside + acetate. Functionally, catalyzes the deacetylation of 1D-myo-inositol 2-acetamido-2-deoxy-alpha-D-glucopyranoside (GlcNAc-Ins) in the mycothiol biosynthesis pathway. The polypeptide is 1D-myo-inositol 2-acetamido-2-deoxy-alpha-D-glucopyranoside deacetylase 2 (Frankia alni (strain DSM 45986 / CECT 9034 / ACN14a)).